The chain runs to 329 residues: Peroxidase 5 (329 aa).

The signal sequence occupies residues methionine 1 to alanine 26. Position 27 is a pyrrolidone carboxylic acid (glutamine 27). 4 disulfides stabilise this stretch: cysteine 37/cysteine 117, cysteine 70/cysteine 75, cysteine 123/cysteine 324, and cysteine 202/cysteine 234. The active-site Proton acceptor is the histidine 68. Ca(2+)-binding residues include aspartate 69, valine 72, glycine 74, aspartate 76, and serine 78. Residue proline 165 coordinates substrate. Histidine 195 provides a ligand contact to heme b. Threonine 196 contributes to the Ca(2+) binding site. The N-linked (GlcNAc...) asparagine glycan is linked to asparagine 213. Positions 251 and 256 each coordinate Ca(2+).

This sequence belongs to the peroxidase family. Classical plant (class III) peroxidase subfamily. It depends on heme b as a cofactor. Requires Ca(2+) as cofactor.

It localises to the secreted. The catalysed reaction is 2 a phenolic donor + H2O2 = 2 a phenolic radical donor + 2 H2O. Its function is as follows. Removal of H(2)O(2), oxidation of toxic reductants, biosynthesis and degradation of lignin, suberization, auxin catabolism, response to environmental stresses such as wounding, pathogen attack and oxidative stress. These functions might be dependent on each isozyme/isoform in each plant tissue. This Vitis vinifera (Grape) protein is Peroxidase 5.